The sequence spans 261 residues: Imidazole glycerol phosphate synthase subunit HisF (261 aa).

Residues aspartate 12 and aspartate 131 contribute to the active site.

This sequence belongs to the HisA/HisF family. In terms of assembly, heterodimer of HisH and HisF.

It localises to the cytoplasm. It carries out the reaction 5-[(5-phospho-1-deoxy-D-ribulos-1-ylimino)methylamino]-1-(5-phospho-beta-D-ribosyl)imidazole-4-carboxamide + L-glutamine = D-erythro-1-(imidazol-4-yl)glycerol 3-phosphate + 5-amino-1-(5-phospho-beta-D-ribosyl)imidazole-4-carboxamide + L-glutamate + H(+). It participates in amino-acid biosynthesis; L-histidine biosynthesis; L-histidine from 5-phospho-alpha-D-ribose 1-diphosphate: step 5/9. IGPS catalyzes the conversion of PRFAR and glutamine to IGP, AICAR and glutamate. The HisF subunit catalyzes the cyclization activity that produces IGP and AICAR from PRFAR using the ammonia provided by the HisH subunit. The protein is Imidazole glycerol phosphate synthase subunit HisF of Brucella anthropi (strain ATCC 49188 / DSM 6882 / CCUG 24695 / JCM 21032 / LMG 3331 / NBRC 15819 / NCTC 12168 / Alc 37) (Ochrobactrum anthropi).